Here is a 361-residue protein sequence, read N- to C-terminus: Chorismate synthase (361 aa).

NADP(+) contacts are provided by R48 and R54. FMN-binding positions include R125 to S127, N238 to A239, G278, K293 to S297, and R319.

This sequence belongs to the chorismate synthase family. Homotetramer. FMNH2 serves as cofactor.

It carries out the reaction 5-O-(1-carboxyvinyl)-3-phosphoshikimate = chorismate + phosphate. It functions in the pathway metabolic intermediate biosynthesis; chorismate biosynthesis; chorismate from D-erythrose 4-phosphate and phosphoenolpyruvate: step 7/7. Functionally, catalyzes the anti-1,4-elimination of the C-3 phosphate and the C-6 proR hydrogen from 5-enolpyruvylshikimate-3-phosphate (EPSP) to yield chorismate, which is the branch point compound that serves as the starting substrate for the three terminal pathways of aromatic amino acid biosynthesis. This reaction introduces a second double bond into the aromatic ring system. In Cronobacter sakazakii (strain ATCC BAA-894) (Enterobacter sakazakii), this protein is Chorismate synthase.